We begin with the raw amino-acid sequence, 614 residues long: Vitamin B12 transporter BtuB (614 aa).

Residues 1-20 form the signal peptide; it reads MIKKASLLTACSVTAFSAWA. Positions 26-33 match the TonB box motif; the sequence is DTLVVTAN. The TBDR plug domain occupies 38-152; sequence PRSTVLAPTT…IGGVVNIITT (115 aa). Cyanocob(III)alamin-binding positions include L83, S85, N92, and 110-111; that span reads VS. Positions 155 to 614 constitute a TBDR beta-barrel domain; it reads EPGTEISAGW…EYTLSGSYTF (460 aa). The next 3 beta stranded transmembrane spans lie at 158-165, 169-178, and 184-195; these read TEISAGWG, YQNYDVSTQQ, and TRVTLLGDYAHT. Ca(2+) contacts are provided by D199, Q211, D213, and D215. A run of 2 beta stranded transmembrane segments spans residues 217–227 and 232–248; these read FLSKTLYGALE and DAWSGFVRGYGYDNRTN. The Ca(2+) site is built by Y249 and D250. Position 251 (A251) interacts with cyanocob(III)alamin. Residue D261 participates in Ca(2+) binding. 14 beta stranded membrane passes run 263–277, 279–296, 309–325, 328–337, 353–369, 371–381, 385–400, 403–417, 434–443, 449–458, 473–490, 494–509, 517–529, and 535–550; these read RKLYSQSWDAGLRYN, ELIKSQLITSYSHSKDYN, TLDEMKQYTVQWANNVI, HGSIGAGVDW, YDQRNTGIYLTGLQQVG, FTFEGAARNDD, FGRHGTWQTSAGWEFI, YRFIASYGTSYKAPN, KSKQWEGAFE, VNWRISGYRN, YYNEGKARIKGVEATANF, PLTHTVSYDYVDARNA, RRAKQQVKYQLDW, and DWGITYQYLGTRYDKD. T309 contacts cyanocob(III)alamin. R517 provides a ligand contact to cyanocob(III)alamin. Y551 contacts cyanocob(III)alamin. A run of 3 beta stranded transmembrane segments spans residues 558 to 572, 585 to 596, and 602 to 614; these read TVKMGGVSLWDLAVA, IANLFDKDYETV, and AGREYTLSGSYTF. The TonB C-terminal box signature appears at 597–614; sequence YGYQTAGREYTLSGSYTF.

It belongs to the TonB-dependent receptor family. BtuB (TC 1.B.14.3.1) subfamily.

It localises to the cell outer membrane. In terms of biological role, involved in the active translocation of vitamin B12 (cyanocobalamin) across the outer membrane to the periplasmic space. It derives its energy for transport by interacting with the trans-periplasmic membrane protein TonB. The polypeptide is Vitamin B12 transporter BtuB (Escherichia coli O139:H28 (strain E24377A / ETEC)).